The chain runs to 841 residues: MVLNYIQRWFKWVIPTFGFLAIHYIYIISLTIIASILLFTGGTTTKIKYIDALFLASSATTQTGLNSVDLNSLSIWQQFILYGFTAITVPIWMHGSISFIRLYWFRRKFKDVVRQNRTRKFQRKLRKSLMKKSEDDEEQGVRGRKIRVMLPYLHSLRSPTSLKNFSRFDTHDSTNNPYFPDNPPSPKADISKDEYFGKYLPKKSDTLDMDLESHNMTFHDYEPSIENKNYDFGSSHSASMQMYEMDDLHPRLRRQSSFISSVNPLEADDTRETLSEGALVQESLPMAYSYSDTNLVVSRDSFTLTGDDNLFPEGGLRPANTIDGIVRSSLSSSSLSKDTEPSTVDMHIAFTGLNKPTIERERNLKLRKKSRFYKKSLRSRFSRGLHRPIRWTKSFTSNRRNLTLERVLSSAFAKKREPSISSRHTTMSLPYLSYNPTVDRNSAFVALSKEQRDELGGIEYRALKCVCSMVTLYFIIFNIAAFVTFIVFAYTAVGSREVIDSYDLRRGWWALFSSASSFNDLGFSLIPSSFVPMNRNIFLLLISSLFIIAGNTGFPCFFRTFIWTTYKLYPFSFEKKEAMAFLLDHPRRCFTLLFPSGATWVLFFVLLLLNVIDLVLFMVLDTGSKAVASLPKGIRVVNAIFQSVCTRTAGFTSVSISELHPAVLVSYMVMMYISVYPVAINMRNTNVYEERSLGVYRTEDDEGKSFLKDHLTEQLSYDLWYIFLGLFIICICEGGKISNPLDTDFSIFTVLFEVVSAYGTVGLSTGLSSSNCSLSARFTTISKLVIIALELRGRHRGLPRAVDRAILLPSEKNNLKEEEDYQRRHGFSIDNARGSIAVSRD.

The next 2 helical transmembrane spans lie at 24–44 and 80–100; these read YIYI…GGTT and ILYG…ISFI. N-linked (GlcNAc...) asparagine glycans are attached at residues Asn116 and Asn164. The disordered stretch occupies residues 173 to 192; that stretch reads STNNPYFPDNPPSPKADISK. Residues Asn215 and Asn401 are each glycosylated (N-linked (GlcNAc...) asparagine). Helical transmembrane passes span 469-489, 507-527, 537-557, 600-620, 662-682, 715-735, and 747-767; these read MVTL…IVFA, GWWA…SLIP, IFLL…FPCF, WVLF…FMVL, AVLV…AINM, LSYD…CEGG, and IFTV…STGL. An N-linked (GlcNAc...) asparagine glycan is attached at Asn771.

Belongs to the TrkH potassium transport family.

The protein resides in the cell membrane. In terms of biological role, together with TRK2, defines the major, high-affinity potassium influx transport system. Involved in maintenance of the proper sodium/potassium ratio in the cell and in regulating the plasma membrane potential. The sequence is that of Potassium transport protein 1 (trk1) from Schizosaccharomyces pombe (strain 972 / ATCC 24843) (Fission yeast).